The sequence spans 142 residues: Large ribosomal subunit protein uL11 (142 aa).

The protein belongs to the universal ribosomal protein uL11 family. Part of the ribosomal stalk of the 50S ribosomal subunit. Interacts with L10 and the large rRNA to form the base of the stalk. L10 forms an elongated spine to which L12 dimers bind in a sequential fashion forming a multimeric L10(L12)X complex. Post-translationally, one or more lysine residues are methylated.

Forms part of the ribosomal stalk which helps the ribosome interact with GTP-bound translation factors. This chain is Large ribosomal subunit protein uL11, found in Afipia carboxidovorans (strain ATCC 49405 / DSM 1227 / KCTC 32145 / OM5) (Oligotropha carboxidovorans).